Reading from the N-terminus, the 54-residue chain is Large ribosomal subunit protein bL33A (54 aa).

It belongs to the bacterial ribosomal protein bL33 family.

The sequence is that of Large ribosomal subunit protein bL33A from Saccharopolyspora erythraea (strain ATCC 11635 / DSM 40517 / JCM 4748 / NBRC 13426 / NCIMB 8594 / NRRL 2338).